Here is a 1176-residue protein sequence, read N- to C-terminus: Pesticidal crystal protein Cry1Aa (1176 aa).

The protein belongs to the delta endotoxin family.

Its function is as follows. Promotes colloidosmotic lysis by binding to the midgut epithelial cells of many lepidopteran larvae. This chain is Pesticidal crystal protein Cry1Aa (cry1Aa), found in Bacillus thuringiensis subsp. entomocidus.